The primary structure comprises 80 residues: MSDAAVPPKKASPKKAAAKKASPKKSAARKTAAKKTAKKPAVRKPAAKKRAAPKKKPAAAKKPAAKKAPKKAVKKAPKKK.

Residues 1–80 (MSDAAVPPKK…KAVKKAPKKK (80 aa)) are disordered. Residues 11-80 (ASPKKAAAKK…KAVKKAPKKK (70 aa)) show a composition bias toward basic residues.

It localises to the nucleus. It is found in the chromosome. The polypeptide is Histone H1.M6.1 (Trypanosoma cruzi).